Consider the following 625-residue polypeptide: Probable potassium transport system protein Kup 2 (625 aa).

Transmembrane regions (helical) follow at residues 15 to 35 (LSFAALGVVFGDIGTSPLYAF), 52 to 72 (ILSLIFWSLIIIVSIKYLVIV), 98 to 118 (GGWLLFITLVGIGLIIGDGIL), 134 to 154 (LSPNLAKYVLPVTLIILFFLF), 164 to 184 (IGIYFAPVMLIWFITIGVLGF), 203 to 223 (IYFFMIHKYFALFILGGVFLV), 246 to 266 (WFAVALPALLLCYFGQGAFVL), 284 to 304 (FLPVMIILATIATIIASQAII), 336 to 356 (VYLPLINFILALGTCSLVVIF), 365 to 385 (AYGIAVNLDMLITTVLVGIIA), 394 to 414 (FKVMIFPLILVIELAFFAGNI), and 417 to 437 (LLTGGWIPILIAFLGFVVMYT).

Belongs to the HAK/KUP transporter (TC 2.A.72) family.

It localises to the cell inner membrane. The catalysed reaction is K(+)(in) + H(+)(in) = K(+)(out) + H(+)(out). Its function is as follows. Transport of potassium into the cell. Likely operates as a K(+):H(+) symporter. This is Probable potassium transport system protein Kup 2 from Legionella pneumophila subsp. pneumophila (strain Philadelphia 1 / ATCC 33152 / DSM 7513).